The sequence spans 248 residues: 3-deoxy-manno-octulosonate cytidylyltransferase (248 aa).

It belongs to the KdsB family.

It localises to the cytoplasm. The catalysed reaction is 3-deoxy-alpha-D-manno-oct-2-ulosonate + CTP = CMP-3-deoxy-beta-D-manno-octulosonate + diphosphate. The protein operates within nucleotide-sugar biosynthesis; CMP-3-deoxy-D-manno-octulosonate biosynthesis; CMP-3-deoxy-D-manno-octulosonate from 3-deoxy-D-manno-octulosonate and CTP: step 1/1. Its pathway is bacterial outer membrane biogenesis; lipopolysaccharide biosynthesis. Functionally, activates KDO (a required 8-carbon sugar) for incorporation into bacterial lipopolysaccharide in Gram-negative bacteria. In Salmonella enteritidis PT4 (strain P125109), this protein is 3-deoxy-manno-octulosonate cytidylyltransferase.